The following is a 123-amino-acid chain: Testis-expressed protein 12 (123 aa).

The interval 1-41 (MMANHLVKPDSRNCKRARELEPQVSDSPQVSSLGKSESSLS) is disordered. The segment covering 7–21 (VKPDSRNCKRARELE) has biased composition (basic and acidic residues). The segment covering 31–41 (SSLGKSESSLS) has biased composition (low complexity).

Interacts with SYCE2. Testis (at protein level). Detected in ovary. Expressed in both male and female germ cells.

The protein localises to the chromosome. In terms of biological role, component of the transverse central element of synaptonemal complexes (SCS), formed between homologous chromosomes during meiotic prophase. Requires SYCP1 in order to be incorporated into the central element. The polypeptide is Testis-expressed protein 12 (Tex12) (Mus musculus (Mouse)).